Reading from the N-terminus, the 1400-residue chain is DNA-directed RNA polymerase subunit beta' (1400 aa).

Zn(2+) contacts are provided by Cys70, Cys72, Cys85, and Cys88. Residues Asp460, Asp462, and Asp464 each coordinate Mg(2+). Positions 814, 888, 895, and 898 each coordinate Zn(2+). Positions 1367 to 1400 (DRQAKRAEAQEGPSAEQATDNLAALLNAGFSSDE) are disordered.

Belongs to the RNA polymerase beta' chain family. As to quaternary structure, the RNAP catalytic core consists of 2 alpha, 1 beta, 1 beta' and 1 omega subunit. When a sigma factor is associated with the core the holoenzyme is formed, which can initiate transcription. The cofactor is Mg(2+). Requires Zn(2+) as cofactor.

The catalysed reaction is RNA(n) + a ribonucleoside 5'-triphosphate = RNA(n+1) + diphosphate. Its function is as follows. DNA-dependent RNA polymerase catalyzes the transcription of DNA into RNA using the four ribonucleoside triphosphates as substrates. The polypeptide is DNA-directed RNA polymerase subunit beta' (Vibrio campbellii (strain ATCC BAA-1116)).